Consider the following 332-residue polypeptide: Oxygen-dependent coproporphyrinogen-III oxidase (332 aa).

S119 provides a ligand contact to coproporphyrinogen III. The active-site Proton donor is the H133. Coproporphyrinogen III contacts are provided by residues 135–137 and 284–285; these read NVR and GR.

Belongs to the aerobic coproporphyrinogen-III oxidase family. As to quaternary structure, homodimer.

The enzyme catalyses coproporphyrinogen III + O2 + 2 H(+) = protoporphyrinogen IX + 2 CO2 + 2 H2O. The protein operates within porphyrin-containing compound metabolism; protoporphyrin-IX biosynthesis; protoporphyrinogen-IX from coproporphyrinogen-III (O2 route): step 1/1. Functionally, involved in the heme biosynthesis. Catalyzes the aerobic oxidative decarboxylation of propionate groups of rings A and B of coproporphyrinogen-III to yield the vinyl groups in protoporphyrinogen-IX. In Dictyostelium discoideum (Social amoeba), this protein is Oxygen-dependent coproporphyrinogen-III oxidase (cpox).